A 2130-amino-acid polypeptide reads, in one-letter code: Bromodomain adjacent to zinc finger domain protein 2B (2130 aa).

Disordered stretches follow at residues 1 to 42 (MESG…TGAA), 82 to 118 (LFAP…SLNG), 151 to 293 (GGRK…QKQP), 491 to 518 (KTTG…PVSN), 543 to 633 (VDSD…SSIG), 756 to 790 (EGRR…GSTE), and 944 to 966 (RKKA…LNKE). Positions 8-33 (TSSSVSSTAAASSPVSSTPSVASAVS) are enriched in low complexity. The span at 183-206 (ESSSNSDSDSGSSSDTSSEGISSS) shows a compositional bias: low complexity. A compositionally biased stretch (acidic residues) spans 207–234 (DSDDLEEDEEEEEDQSAEESEDDESDSE). Residues 250 to 270 (GVKDMKTDGQKAHEKSQEKRT) are compositionally biased toward basic and acidic residues. The segment covering 272–283 (QQIPLVSDSQTH) has biased composition (polar residues). The span at 284-293 (SSFQSQQKQP) shows a compositional bias: low complexity. The segment covering 492–505 (TTGNRTLVVPSTSP) has biased composition (polar residues). Over residues 543-554 (VDSDAPSSKESD) the composition is skewed to basic and acidic residues. Residues 555–611 (DSNDDDDDDEDEDEDDEDDDSDDSQSESDSNSESDTDGSEDEDDEDDKDQDESDTDT) show a composition bias toward acidic residues. Low complexity predominate over residues 623–633 (TGSSIKSSSIG). The MBD domain occupies 687–762 (VTDERELRVP…RAMEGRRGRP (76 aa)). The segment covering 756-775 (EGRRGRPPNPDRQHSREESR) has biased composition (basic and acidic residues). Positions 797–984 (AKLLRKLQAQ…ELEMAKELKK (188 aa)) form a coiled coil. In terms of domain architecture, DDT spans 1010–1075 (GSTFSDCLMI…VTAAVCDPGL (66 aa)). Disordered stretches follow at residues 1186-1265 (TGKR…DQTV), 1431-1454 (SLCS…NLFS), 1499-1545 (VTHV…PFAM), and 1773-1795 (HKKH…ERKN). A compositionally biased stretch (acidic residues) spans 1220 to 1244 (SDYDDDDDDDSDDQADEDDEDEEDK). Residues 1245–1254 (EDKKGKKAEV) show a composition bias toward basic and acidic residues. Residues 1514-1526 (SHPPSKSPSPVPS) are compositionally biased toward pro residues. Residues 1895-1945 (KVYCQICRKGDNEELLLLCDGCDKGCHTYCHRPKITTIPDGDWFCPACIAK) form a PHD-type zinc finger. A disordered region spans residues 1957 to 2019 (QIKGKKSNEQ…KQENFTAIKK (63 aa)). Basic and acidic residues predominate over residues 1991-2002 (GKTEPKKRKMDE). The segment covering 2004–2014 (VSVSQGKQENF) has biased composition (polar residues). In terms of domain architecture, Bromo spans 2022 to 2126 (RDDSKDLAIC…KYFEKKWTEI (105 aa)).

It belongs to the WAL family.

Its subcellular location is the nucleus. Functionally, regulatory subunit of the ATP-dependent BRF-1 and BRF-5 ISWI chromatin remodeling complexes, which form ordered nucleosome arrays on chromatin and facilitate access to DNA during DNA-templated processes such as DNA replication, transcription, and repair. Both complexes regulate the spacing of nucleosomes along the chromatin and have the ability to slide mononucleosomes to the center of a DNA template. The BRF-1 ISWI chromatin remodeling complex has a lower ATP hydrolysis rate than the BRF-5 ISWI chromatin remodeling complex. Chromatin reader protein. Represses the expression of mitochondrial function-related genes, perhaps by transcriptional regulation. In Gallus gallus (Chicken), this protein is Bromodomain adjacent to zinc finger domain protein 2B (BAZ2B).